The following is a 95-amino-acid chain: Aspartyl/glutamyl-tRNA(Asn/Gln) amidotransferase subunit C (95 aa).

This sequence belongs to the GatC family. As to quaternary structure, heterotrimer of A, B and C subunits.

It catalyses the reaction L-glutamyl-tRNA(Gln) + L-glutamine + ATP + H2O = L-glutaminyl-tRNA(Gln) + L-glutamate + ADP + phosphate + H(+). The catalysed reaction is L-aspartyl-tRNA(Asn) + L-glutamine + ATP + H2O = L-asparaginyl-tRNA(Asn) + L-glutamate + ADP + phosphate + 2 H(+). Its function is as follows. Allows the formation of correctly charged Asn-tRNA(Asn) or Gln-tRNA(Gln) through the transamidation of misacylated Asp-tRNA(Asn) or Glu-tRNA(Gln) in organisms which lack either or both of asparaginyl-tRNA or glutaminyl-tRNA synthetases. The reaction takes place in the presence of glutamine and ATP through an activated phospho-Asp-tRNA(Asn) or phospho-Glu-tRNA(Gln). The sequence is that of Aspartyl/glutamyl-tRNA(Asn/Gln) amidotransferase subunit C from Azotobacter vinelandii (strain DJ / ATCC BAA-1303).